Reading from the N-terminus, the 446-residue chain is Transcription factor Dp-2 (446 aa).

Thr2 bears the N-acetylthreonine mark. A Phosphoserine modification is found at Ser24. The tract at residues 60 to 82 is interaction with CEBPA; the sequence is PQMIISTPQRLTSSGSVLIGSPY. The Nuclear localization signal motif lies at 103 to 118; the sequence is GDRKRARKFIDSDFSE. Ser122 bears the Phosphoserine mark. The DNA-binding element occupies 129-210; it reads GKGLRHFSMK…KKEIKWIGLP (82 aa). The short motif at 176–210 is the DEF box element; sequence DQKNIRRRVYDALNVLMAMNIISKEKKEIKWIGLP. Residues 219–292 are dimerization; that stretch reads NLEIEKQRRI…RKTVIDCSIS (74 aa). A DCB1 region spans residues 229-261; the sequence is ERIKQKRAQLQELLLQQIAFKNLVQRNRQNEQQ. Positions 274–330 are DCB2; it reads LPFIIINTSRKTVIDCSISSDKFEYLFNFDNTFEIHDDIEVLKRMGMSFGLESGKCS. The span at 409–419 shows a compositional bias: low complexity; the sequence is SHQSSSAASHC. The tract at residues 409 to 446 is disordered; the sequence is SHQSSSAASHCSESRGETPCSFNDEDEEDDEEDSSSPE. A compositionally biased stretch (acidic residues) spans 431–446; the sequence is NDEDEEDDEEDSSSPE.

This sequence belongs to the E2F/DP family. In terms of assembly, component of the DRTF1/E2F transcription factor complex. Forms heterodimers with E2F family members. The complex can interact with hypophosphorylated retinoblastoma protein RB1 and related proteins (RBL1 and RBL2) that inhibit the E2F transactivation domain. During the cell cycle, RB becomes phosphorylated in mid-to-late G1 phase, detaches from the DRTF1/E2F complex rendering E2F transcriptionally active. Viral oncoproteins, notably E1A, T-antigen and HPV E7, are capable of sequestering RB protein, thus releasing the active complex. Interacts with GMCL. Component of the DREAM complex (also named LINC complex) at least composed of E2F4, E2F5, LIN9, LIN37, LIN52, LIN54, MYBL1, MYBL2, RBL1, RBL2, RBBP4, TFDP1 and TFDP2. The complex exists in quiescent cells where it represses cell cycle-dependent genes. It dissociates in S phase when LIN9, LIN37, LIN52 and LIN54 form a subcomplex that binds to MYBL2. The complex TFDP2:E2F1 interacts with CEBPA; the interaction prevents CEBPA binding to target genes promoters and represses its transcriptional activity. Ser-24 is probably phosphorylated by CDK2. In terms of tissue distribution, high levels in heart and skeletal muscle. Also found in placenta, kidney, brain, lung and liver. The presence as well as the abundance of the different transcripts appear to vary significantly in different tissues and cell lines.

The protein localises to the nucleus. Its function is as follows. Can stimulate E2F-dependent transcription. Binds DNA cooperatively with E2F family members through the E2 recognition site, 5'-TTTC[CG]CGC-3', found in the promoter region of a number of genes whose products are involved in cell cycle regulation or in DNA replication. The TFDP2:E2F complex functions in the control of cell-cycle progression from G1 to S phase. The E2F1:DP complex appears to mediate both cell proliferation and apoptosis. Blocks adipocyte differentiation by repressing CEBPA binding to its target gene promoters. The protein is Transcription factor Dp-2 (TFDP2) of Homo sapiens (Human).